Reading from the N-terminus, the 310-residue chain is Homeobox protein dsc-1 (310 aa).

Residues 180-239 (RRRFRTNFTELQSTFLEDSFKESHYPDHKAKKYMADFLKIPEDRITVWFQNRRAKWRRKE) constitute a DNA-binding region (homeobox). The segment at 262 to 310 (CFSAQHPDDGPNAKHPNSFGIPNQPMSLDQFPMNTEQDFPEFPSLQEHQ) is disordered. Over residues 281–298 (GIPNQPMSLDQFPMNTEQ) the composition is skewed to polar residues.

As to expression, expressed in the bilateral sensory neurons AWA, AWB, AWC, ASE, FLP and PVD. Also expressed in the enteric intestinal and anal depressor muscles.

It is found in the nucleus. The protein resides in the cell projection. Its subcellular location is the axon. The protein localises to the cytoplasm. Its function is as follows. Transcriptional regulator which plays a role in the expulsion step of defecation by controlling enteric muscle-specific expression of exp-1 which is required for enteric muscle contraction. Not required for exp-1 expression in the PDA neuron. Also involved in controlling the length of the defecation cycle. The sequence is that of Homeobox protein dsc-1 from Caenorhabditis elegans.